A 334-amino-acid polypeptide reads, in one-letter code: B3 domain-containing protein LOC_Os12g40090 (334 aa).

Positions arginine 5–serine 102 form a DNA-binding region, TF-B3 1. The segment at threonine 142 to cysteine 178 is disordered. The segment covering lysine 154–lysine 166 has biased composition (low complexity). A DNA-binding region (TF-B3 2) is located at residues phenylalanine 227–alanine 326.

Its subcellular location is the nucleus. The sequence is that of B3 domain-containing protein LOC_Os12g40090 from Oryza sativa subsp. japonica (Rice).